The sequence spans 96 residues: Co-chaperonin GroES (96 aa).

This sequence belongs to the GroES chaperonin family. In terms of assembly, heptamer of 7 subunits arranged in a ring. Interacts with the chaperonin GroEL.

The protein resides in the cytoplasm. Its function is as follows. Together with the chaperonin GroEL, plays an essential role in assisting protein folding. The GroEL-GroES system forms a nano-cage that allows encapsulation of the non-native substrate proteins and provides a physical environment optimized to promote and accelerate protein folding. GroES binds to the apical surface of the GroEL ring, thereby capping the opening of the GroEL channel. The protein is Co-chaperonin GroES of Leptospira interrogans serogroup Icterohaemorrhagiae serovar copenhageni (strain Fiocruz L1-130).